Consider the following 666-residue polypeptide: N-acetylgalactosaminyltransferase 6 (666 aa).

Over 1–11 the chain is Cytoplasmic; that stretch reads MRRPNLKWIVK. Residues 12–31 form a helical; Signal-anchor for type II membrane protein membrane-spanning segment; it reads ASLLLLISLTLFVLITSWIS. Topologically, residues 32–666 are lumenal; it reads STPYTNKPVH…NYSQDLVLSL (635 aa). A disordered region spans residues 90 to 126; sequence EPVEEEVDNPHPADDEPQQQPQEELQMAAPADASVKK. The segment covering 107–120 has biased composition (low complexity); the sequence is QQQPQEELQMAAPA. N181 carries N-linked (GlcNAc...) asparagine glycosylation. 5 disulfides stabilise this stretch: C192/C421, C412/C491, C531/C548, C577/C594, and C621/C636. The catalytic subdomain A stretch occupies residues 201-311; that stretch reads LPTVSVIIIF…YNWLPPLLEP (111 aa). Substrate is bound by residues D242 and R272. N285 is a glycosylation site (N-linked (GlcNAc...) asparagine). D295 contributes to the Mn(2+) binding site. A substrate-binding site is contributed by S296. H297 contacts Mn(2+). The tract at residues 367–429 is catalytic subdomain B; that stretch reads PFKSPIMAGG…PCSRIGHIYR (63 aa). W398 contacts substrate. A Mn(2+)-binding site is contributed by H426. Residue R429 coordinates substrate. The Ricin B-type lectin domain occupies 518–648; that stretch reads AMGALQNVGN…DNRFQQWNFG (131 aa). 2 N-linked (GlcNAc...) asparagine glycosylation sites follow: N651 and N657.

This sequence belongs to the glycosyltransferase 2 family. GalNAc-T subfamily. Mn(2+) is required as a cofactor. In terms of tissue distribution, expressed during oogenesis, in the somatically derived follicle cells that surround the developing oocyte, which are involved in the maturation of the oocyte and construction of the egg shell, as well as playing a role in subsequent embryonic pattern formation. Expressed in the salivary glands from embryonic stage 12 onwards, becoming stronger at stage 13. During embryonic stages 12-13, also expressed in the posterior midgut and hindgut. During embryonic stages 14-15, expression continues in the hindgut. Expression is detected in the epidermis and antennomaxillary complex during embryonic stages 16-17. In third instar larvae, ubiquitously expressed in wing, eye-antennal, leg and haltere imaginal disks.

The protein resides in the golgi apparatus membrane. The catalysed reaction is L-seryl-[protein] + UDP-N-acetyl-alpha-D-galactosamine = a 3-O-[N-acetyl-alpha-D-galactosaminyl]-L-seryl-[protein] + UDP + H(+). It carries out the reaction L-threonyl-[protein] + UDP-N-acetyl-alpha-D-galactosamine = a 3-O-[N-acetyl-alpha-D-galactosaminyl]-L-threonyl-[protein] + UDP + H(+). The protein operates within protein modification; protein glycosylation. Its function is as follows. Glycopeptide transferase involved in O-linked oligosaccharide biosynthesis, which catalyzes the transfer of an N-acetyl-D-galactosamine residue to an already glycosylated peptide. In contrast to other proteins of the family, it does not act as a peptide transferase that transfers GalNAc onto serine or threonine residue on the protein receptor, but instead requires the prior addition of a GalNAc on a peptide before adding additional GalNAc moieties. Some peptide transferase activity is however not excluded, considering that its appropriate peptide substrate may remain unidentified. Prefers the diglycosylated Muc5AC-3/13 as substrate. Might have a role in protein O-glycosylation in the Golgi and thereby in establishing and/or maintaining a proper secretory apparatus structure. This Drosophila melanogaster (Fruit fly) protein is N-acetylgalactosaminyltransferase 6.